We begin with the raw amino-acid sequence, 466 residues long: 23S rRNA (uracil(1939)-C(5))-methyltransferase RlmD (466 aa).

The region spanning 1–54 is the TRAM domain; that stretch reads MVDVLNIESLDLEARGIAHRDGKVLFVEGALPGERVTVQTVRRKPSYEIAKVEE. Positions 67, 73, 76, and 155 each coordinate [4Fe-4S] cluster. S-adenosyl-L-methionine contacts are provided by Gln264, Phe293, Asn298, Glu314, Asn342, and Asp363. The active-site Nucleophile is the Cys393.

The protein belongs to the class I-like SAM-binding methyltransferase superfamily. RNA M5U methyltransferase family. RlmD subfamily.

The catalysed reaction is uridine(1939) in 23S rRNA + S-adenosyl-L-methionine = 5-methyluridine(1939) in 23S rRNA + S-adenosyl-L-homocysteine + H(+). In terms of biological role, catalyzes the formation of 5-methyl-uridine at position 1939 (m5U1939) in 23S rRNA. The protein is 23S rRNA (uracil(1939)-C(5))-methyltransferase RlmD of Bordetella bronchiseptica (strain ATCC BAA-588 / NCTC 13252 / RB50) (Alcaligenes bronchisepticus).